A 505-amino-acid polypeptide reads, in one-letter code: 2,3-bisphosphoglycerate-independent phosphoglycerate mutase (505 aa).

The Mn(2+) site is built by Asp-15 and Ser-65. Residue Ser-65 is the Phosphoserine intermediate of the active site. Residues His-126, 156 to 157 (RD), Arg-187, Arg-193, 260 to 263 (RPDR), and Lys-333 each bind substrate. Residues Asp-398, His-402, Asp-439, His-440, and His-457 each coordinate Mn(2+).

The protein belongs to the BPG-independent phosphoglycerate mutase family. In terms of assembly, monomer. It depends on Mn(2+) as a cofactor.

The enzyme catalyses (2R)-2-phosphoglycerate = (2R)-3-phosphoglycerate. It participates in carbohydrate degradation; glycolysis; pyruvate from D-glyceraldehyde 3-phosphate: step 3/5. Its function is as follows. Catalyzes the interconversion of 2-phosphoglycerate and 3-phosphoglycerate. In Mycoplasmopsis pulmonis (strain UAB CTIP) (Mycoplasma pulmonis), this protein is 2,3-bisphosphoglycerate-independent phosphoglycerate mutase.